Consider the following 369-residue polypeptide: Ferrochelatase (369 aa).

Fe cation contacts are provided by His-210 and Glu-291.

The protein belongs to the ferrochelatase family.

The protein resides in the cytoplasm. It carries out the reaction heme b + 2 H(+) = protoporphyrin IX + Fe(2+). It participates in porphyrin-containing compound metabolism; protoheme biosynthesis; protoheme from protoporphyrin-IX: step 1/1. Catalyzes the ferrous insertion into protoporphyrin IX. This is Ferrochelatase from Thioalkalivibrio sulfidiphilus (strain HL-EbGR7).